The primary structure comprises 429 residues: Forkhead box protein A1-A (429 aa).

The segment at residues 159 to 253 (KPPYSYISLI…ENGCYLRRQK (95 aa)) is a DNA-binding region (fork-head). A compositionally biased stretch (basic and acidic residues) spans 258-274 (EKTQGGKGNQDGRKDHS). Positions 258–341 (EKTQGGKGNQ…HSTHSLAHES (84 aa)) are disordered. Over residues 287-304 (SSQMDSSSSMSNPSSSPQ) the composition is skewed to low complexity. Over residues 325-336 (PLSSHQNHSTHS) the composition is skewed to polar residues.

At neurula stage, expressed in the notochord but not in the neural floor plate. During tailbud stages, expressed in the neural floor plate. At stage 35, expressed in the rhombencephalon, mesencephalon, pharyngeal pouches, foregut and pronephros. At stage 44, expressed in a region of the gut on the right hand side of the embryo. Expressed in the adult lung and liver.

It is found in the nucleus. Functionally, probable transcription factor. This chain is Forkhead box protein A1-A (foxa1-a), found in Xenopus laevis (African clawed frog).